An 81-amino-acid polypeptide reads, in one-letter code: Antitoxin MT2731 (81 aa).

Antitoxin component of a type II toxin-antitoxin (TA) system. Neutralizes the effect of cognate toxin MT2730. This chain is Antitoxin MT2731, found in Mycobacterium tuberculosis (strain CDC 1551 / Oshkosh).